A 229-amino-acid chain; its full sequence is Translation initiation factor 6 (229 aa).

This sequence belongs to the eIF-6 family.

Functionally, binds to the 50S ribosomal subunit and prevents its association with the 30S ribosomal subunit to form the 70S initiation complex. The chain is Translation initiation factor 6 from Thermococcus kodakarensis (strain ATCC BAA-918 / JCM 12380 / KOD1) (Pyrococcus kodakaraensis (strain KOD1)).